The following is a 458-amino-acid chain: Estrogen-related receptor gamma (458 aa).

K40 participates in a covalent cross-link: Glycyl lysine isopeptide (Lys-Gly) (interchain with G-Cter in SUMO). Positions 42-52 (EPSSPASLTDS) are enriched in polar residues. Positions 42–85 (EPSSPASLTDSVNHHSPGGSSDASGSYSSTMNGHQNGLDSPPLY) are disordered. The residue at position 45 (S45) is a Phosphoserine. Low complexity predominate over residues 57–70 (SPGGSSDASGSYSS). The segment at residues 125-200 (KRLCLVCGDI…VGMLKEGVRL (76 aa)) is a DNA-binding region (nuclear receptor). 2 NR C4-type zinc fingers span residues 128–148 (CLVC…CEAC) and 164–188 (CPAT…FMKC). In terms of domain architecture, NR LBD spans 233–457 (PYNKIVSHLL…KLFLEMLEAK (225 aa)).

This sequence belongs to the nuclear hormone receptor family. NR3 subfamily. In terms of assembly, homodimer. Binds TLE1, PNRC1 and PNRC2. Binds GRIP1. Interacts with NRIP1, NCOA1 and NCOR2. In terms of processing, acetylated by PCAF/KAT2 (in vitro). Post-translationally, sumoylation on Lys-40 is enhanced by phosphorylation at Ser-45 and represses transcriptional activity. Phosphorylation on Ser-45 enhances sumoylation on Lys-40 thus repressing transcriptional activity. As to expression, expressed in the heart, kidney, brain, lung, bone marrow, adrenal gland, trachea, spinal cord and thyroid gland.

Its subcellular location is the nucleus. Its function is as follows. Orphan receptor that acts as a transcription activator in the absence of bound ligand. Binds specifically to an estrogen response element and activates reporter genes controlled by estrogen response elements. Induces the expression of PERM1 in the skeletal muscle. The polypeptide is Estrogen-related receptor gamma (ESRRG) (Homo sapiens (Human)).